Here is a 94-residue protein sequence, read N- to C-terminus: Ribonuclease P protein component 1 (94 aa).

Belongs to the eukaryotic/archaeal RNase P protein component 1 family. In terms of assembly, consists of a catalytic RNA component and at least 4-5 protein subunits.

The protein localises to the cytoplasm. It carries out the reaction Endonucleolytic cleavage of RNA, removing 5'-extranucleotides from tRNA precursor.. Its function is as follows. Part of ribonuclease P, a protein complex that generates mature tRNA molecules by cleaving their 5'-ends. This Haloarcula marismortui (strain ATCC 43049 / DSM 3752 / JCM 8966 / VKM B-1809) (Halobacterium marismortui) protein is Ribonuclease P protein component 1.